Reading from the N-terminus, the 228-residue chain is MLTYLEQKINYEFKDKTLLLEALTHSSWAHEGKNEKVSNERLEFLGDSVLSLVISEYLYKNRKDLEEGSLSKYRAEIVCEPSLARCARKIELGSFLRMGKGEEISGGRDRDSILADAMEALLAAVYLDGGLEAVRRVILDLFKEIIDEVLKGIIYRDYKTRLQEVVQSMEVGKITYELVEEIGPDHNKTFVTQVKIGDVVLGIGQGKSKKESEQAAAMEALSKLGILK.

An RNase III domain is found at 2–130; it reads LTYLEQKINY…LLAAVYLDGG (129 aa). Residue E43 coordinates Mg(2+). The active site involves D47. Residues D116 and E119 each coordinate Mg(2+). Residue E119 is part of the active site. The region spanning 157–226 is the DRBM domain; that stretch reads DYKTRLQEVV…AMEALSKLGI (70 aa).

It belongs to the ribonuclease III family. As to quaternary structure, homodimer. Mg(2+) is required as a cofactor.

Its subcellular location is the cytoplasm. It catalyses the reaction Endonucleolytic cleavage to 5'-phosphomonoester.. Digests double-stranded RNA. Involved in the processing of primary rRNA transcript to yield the immediate precursors to the large and small rRNAs (23S and 16S). Processes some mRNAs, and tRNAs when they are encoded in the rRNA operon. Processes pre-crRNA and tracrRNA of type II CRISPR loci if present in the organism. In Caldanaerobacter subterraneus subsp. tengcongensis (strain DSM 15242 / JCM 11007 / NBRC 100824 / MB4) (Thermoanaerobacter tengcongensis), this protein is Ribonuclease 3.